The sequence spans 617 residues: V-type proton ATPase catalytic subunit A (617 aa).

257-264 (GAFGCGKT) provides a ligand contact to ATP.

It belongs to the ATPase alpha/beta chains family. As to quaternary structure, V-ATPase is a heteromultimeric enzyme composed of a peripheral catalytic V1 complex (components A to H) attached to an integral membrane V0 proton pore complex (components: a, c, c', c'', d, e, f and VOA1).

The protein resides in the vacuole membrane. It carries out the reaction ATP + H2O + 4 H(+)(in) = ADP + phosphate + 5 H(+)(out). In terms of biological role, catalytic subunit of the V1 complex of vacuolar(H+)-ATPase (V-ATPase), a multisubunit enzyme composed of a peripheral complex (V1) that hydrolyzes ATP and a membrane integral complex (V0) that translocates protons. V-ATPase is responsible for acidifying and maintaining the pH of intracellular compartments. The sequence is that of V-type proton ATPase catalytic subunit A (VMA1) from Eremothecium gossypii (strain ATCC 10895 / CBS 109.51 / FGSC 9923 / NRRL Y-1056) (Yeast).